The chain runs to 123 residues: MKALVWVAVGGALGAIVRYFFYKFVPQVYDFPLATFLVNVVASFLLGFIIGAFEAKPWGQQLKLALATGFCGALSTFSTFAADNYILLRSSKYITAFVYTAVSVGLGIVSVALGEDLAQRLLK.

4 helical membrane passes run 5-25 (VWVA…YKFV), 33-53 (LATF…IGAF), 62-82 (LKLA…TFAA), and 94-114 (ITAF…VALG). Na(+) contacts are provided by glycine 72 and serine 75.

It belongs to the fluoride channel Fluc/FEX (TC 1.A.43) family.

Its subcellular location is the cell inner membrane. The enzyme catalyses fluoride(in) = fluoride(out). Its activity is regulated as follows. Na(+) is not transported, but it plays an essential structural role and its presence is essential for fluoride channel function. In terms of biological role, fluoride-specific ion channel. Important for reducing fluoride concentration in the cell, thus reducing its toxicity. This is Fluoride-specific ion channel FluC from Ignicoccus hospitalis (strain KIN4/I / DSM 18386 / JCM 14125).